A 428-amino-acid polypeptide reads, in one-letter code: MQKLLIEGGHTLEGTVSISGAKNSAVALIPAAILADSAVVIDNLPVISDVDLLAELLREIGGDVDLGNQTMTIHPEKMVAMPLPNGRVKKLRASYYLMGAMLGKFKKAVIGLPGGCNLGPRPIDQHIKGFEALGAQVTNEQGAIYLRANELRGAKIYLDVVSVGATINIMLAAVRAKGRTIIENAAKEPEIIDVATLLTSMGAKIKGAGTNVIRIDGVDHLQGCRHSIIPDRIEAGTYMIMAAAMGRRVHIDNVIPTHLESVTAKLREMGTTVEEYDDQLIISGMDPKKGVDIKTLVYPGFPTDLQQPFTSLLTSAEGTSIVTDTIYDARFKHVDELRRMGASVKVEGRSSIVNGKSSLQGAKVKASDLRAGAALVIAGLMAEGITEVSGLEHIDRGYEHLETKLTRLGAKVWREELTEEELEQVKQS.

22-23 (KN) provides a ligand contact to phosphoenolpyruvate. Arg92 provides a ligand contact to UDP-N-acetyl-alpha-D-glucosamine. Cys116 (proton donor) is an active-site residue. Position 116 is a 2-(S-cysteinyl)pyruvic acid O-phosphothioketal (Cys116). Residues 121–125 (RPIDQ), Asp304, and Ile326 contribute to the UDP-N-acetyl-alpha-D-glucosamine site.

This sequence belongs to the EPSP synthase family. MurA subfamily.

The protein resides in the cytoplasm. The catalysed reaction is phosphoenolpyruvate + UDP-N-acetyl-alpha-D-glucosamine = UDP-N-acetyl-3-O-(1-carboxyvinyl)-alpha-D-glucosamine + phosphate. It functions in the pathway cell wall biogenesis; peptidoglycan biosynthesis. Functionally, cell wall formation. Adds enolpyruvyl to UDP-N-acetylglucosamine. The chain is UDP-N-acetylglucosamine 1-carboxyvinyltransferase 2 from Shouchella clausii (strain KSM-K16) (Alkalihalobacillus clausii).